The following is a 553-amino-acid chain: CTP synthase (553 aa).

The interval 1 to 278 (MVRRTHGNSQ…DAYVVRELGL (278 aa)) is amidoligase domain. S25 serves as a coordination point for CTP. UTP is bound at residue S25. Residues 26 to 31 (SLGKGL) and D83 each bind ATP. Positions 83 and 152 each coordinate Mg(2+). Residues 159-161 (DIE), 199-204 (KTKPTQ), and K235 contribute to the CTP site. UTP-binding positions include 199 to 204 (KTKPTQ) and K235. The Glutamine amidotransferase type-1 domain occupies 303–552 (NIAIVGKYID…VKAALDHQAA (250 aa)). G366 provides a ligand contact to L-glutamine. C393 acts as the Nucleophile; for glutamine hydrolysis in catalysis. L-glutamine is bound by residues 394-397 (LGLQ), E417, and R478. Active-site residues include H525 and E527.

It belongs to the CTP synthase family. As to quaternary structure, homotetramer.

The catalysed reaction is UTP + L-glutamine + ATP + H2O = CTP + L-glutamate + ADP + phosphate + 2 H(+). It catalyses the reaction L-glutamine + H2O = L-glutamate + NH4(+). It carries out the reaction UTP + NH4(+) + ATP = CTP + ADP + phosphate + 2 H(+). Its pathway is pyrimidine metabolism; CTP biosynthesis via de novo pathway; CTP from UDP: step 2/2. Allosterically activated by GTP, when glutamine is the substrate; GTP has no effect on the reaction when ammonia is the substrate. The allosteric effector GTP functions by stabilizing the protein conformation that binds the tetrahedral intermediate(s) formed during glutamine hydrolysis. Inhibited by the product CTP, via allosteric rather than competitive inhibition. Functionally, catalyzes the ATP-dependent amination of UTP to CTP with either L-glutamine or ammonia as the source of nitrogen. Regulates intracellular CTP levels through interactions with the four ribonucleotide triphosphates. The protein is CTP synthase of Bifidobacterium longum (strain NCC 2705).